The following is a 471-amino-acid chain: Serine hydroxymethyltransferase 4 (471 aa).

Residue M1 is modified to N-acetylmethionine. An L-serine-binding site is contributed by S39. Residues S39, Y59, and E61 each contribute to the pemetrexed site. Residues E61 and Y69 each contribute to the L-serine site. Pemetrexed-binding positions include 105 to 107 (SGS), H134, S190, and H218. L-serine-binding residues include H218 and K244. K244 carries the post-translational modification N6-(pyridoxal phosphate)lysine. Residue G290 participates in pemetrexed binding. K373 lines the methotrexate pocket. R389 contributes to the L-serine binding site. Pemetrexed is bound at residue R389.

It belongs to the SHMT family. In terms of assembly, homotetramer. Interacts with UBP16. It depends on pyridoxal 5'-phosphate as a cofactor. Mostly expressed in flowers, less abundant in roots, inflorescence stems, and siliques, and barely detectable in leaves.

Its subcellular location is the cytoplasm. It catalyses the reaction (6R)-5,10-methylene-5,6,7,8-tetrahydrofolate + glycine + H2O = (6S)-5,6,7,8-tetrahydrofolate + L-serine. Its pathway is one-carbon metabolism; tetrahydrofolate interconversion. Inhibited by the antifolate drugs methotrexate and pemetrexed. Functionally, catalyzes the interconversion of serine and glycine with the conversion of tetrahydrofolate (THF) into 5,10-methylene-THF. This chain is Serine hydroxymethyltransferase 4, found in Arabidopsis thaliana (Mouse-ear cress).